The chain runs to 477 residues: V-type ATP synthase beta chain (477 aa).

This sequence belongs to the ATPase alpha/beta chains family.

Produces ATP from ADP in the presence of a proton gradient across the membrane. The V-type beta chain is a regulatory subunit. This Anaeromyxobacter sp. (strain K) protein is V-type ATP synthase beta chain.